The sequence spans 243 residues: Thiocyanate hydrolase subunit gamma (243 aa).

Co(3+) contacts are provided by Cys128, Cys131, Ser132, and Cys133. Residue Cys131 is modified to Cysteine sulfinic acid (-SO2H). Position 133 is a cysteine sulfenic acid (-SOH) (Cys133).

This sequence belongs to the nitrile hydratase subunit alpha family. In terms of assembly, heterododecamer consisting of 4 alpha, 4 beta, and 4 gamma subunits. Co(3+) is required as a cofactor.

The catalysed reaction is thiocyanate + H2O + 2 H(+) = carbonyl sulfide + NH4(+). It participates in organosulfur degradation; thiocyanate degradation. Functionally, involved in the degradation of thiocyanate. The sequence is that of Thiocyanate hydrolase subunit gamma (scnC) from Thiobacillus thioparus.